The sequence spans 119 residues: Large ribosomal subunit protein uL18 (119 aa).

The protein belongs to the universal ribosomal protein uL18 family. Part of the 50S ribosomal subunit; part of the 5S rRNA/L5/L18/L25 subcomplex. Contacts the 5S and 23S rRNAs.

In terms of biological role, this is one of the proteins that bind and probably mediate the attachment of the 5S RNA into the large ribosomal subunit, where it forms part of the central protuberance. In Helicobacter pylori (strain HPAG1), this protein is Large ribosomal subunit protein uL18.